The primary structure comprises 198 residues: Dephospho-CoA kinase (198 aa).

One can recognise a DPCK domain in the interval 2 to 90 (LIAIVGKPGV…KLSLVTKPLL (89 aa)). 10–15 (GVGKTS) is a binding site for ATP.

Belongs to the CoaE family.

It is found in the cytoplasm. The catalysed reaction is 3'-dephospho-CoA + ATP = ADP + CoA + H(+). The protein operates within cofactor biosynthesis; coenzyme A biosynthesis; CoA from (R)-pantothenate: step 5/5. Catalyzes the phosphorylation of the 3'-hydroxyl group of dephosphocoenzyme A to form coenzyme A. The chain is Dephospho-CoA kinase from Mycoplasma genitalium (strain ATCC 33530 / DSM 19775 / NCTC 10195 / G37) (Mycoplasmoides genitalium).